The primary structure comprises 170 residues: Calcineurin subunit B type 1 (170 aa).

G2 carries the N-myristoyl glycine lipid modification. EF-hand domains are found at residues 18 to 46, 50 to 85, 87 to 122, and 128 to 163; these read DEIK…FMSL, QQNP…FSVK, DKEQ…MVGN, and QLQQ…LDIH. 15 residues coordinate Ca(2+): D31, D33, S35, S37, E42, D63, D65, N67, E69, E74, D100, D102, D104, Y106, and E111. Residue Y106 is modified to Phosphotyrosine. Residues 131–136 are calcineurin A binding; sequence QIVDKT. Ca(2+) is bound by residues D141, D143, D145, R147, and E152.

It belongs to the calcineurin regulatory subunit family. In terms of assembly, forms a complex composed of a calmodulin-dependent catalytic subunit (also known as calcineurin A) and a regulatory Ca(2+)-binding subunit (also known as calcineurin B). There are three catalytic subunits, each encoded by a separate gene (PPP3CA, PPP3CB, and PPP3CC) and two regulatory subunits which are also encoded by separate genes (PPP3R1 and PPP3R2). The interaction between the 2 subunits is Ca(2+)-independent. Interacts with catalytic subunit PPP3CA/calcineurin A. Interacts with catalytic subunit PPP3CB/calcineurin A. Interacts with CIB1 (via C-terminal region); the interaction increases upon cardiomyocyte hypertrophy. Interacts with RCAN1. Interacts with SPATA33 (via PQIIIT motif).

The protein localises to the cytoplasm. Its subcellular location is the cytosol. It localises to the cell membrane. The protein resides in the sarcolemma. Regulatory subunit of calcineurin, a calcium-dependent, calmodulin stimulated protein phosphatase. Confers calcium sensitivity. The protein is Calcineurin subunit B type 1 (PPP3R1) of Bos taurus (Bovine).